The sequence spans 223 residues: Ribose-5-phosphate isomerase A (223 aa).

Substrate is bound by residues 32-35 (TGST), 85-88 (DGAD), and 98-101 (KGGG). E107 (proton acceptor) is an active-site residue. K125 is a binding site for substrate.

Belongs to the ribose 5-phosphate isomerase family. In terms of assembly, homodimer.

It catalyses the reaction aldehydo-D-ribose 5-phosphate = D-ribulose 5-phosphate. It participates in carbohydrate degradation; pentose phosphate pathway; D-ribose 5-phosphate from D-ribulose 5-phosphate (non-oxidative stage): step 1/1. Catalyzes the reversible conversion of ribose-5-phosphate to ribulose 5-phosphate. The polypeptide is Ribose-5-phosphate isomerase A (Pseudomonas savastanoi pv. phaseolicola (strain 1448A / Race 6) (Pseudomonas syringae pv. phaseolicola (strain 1448A / Race 6))).